Consider the following 372-residue polypeptide: Peroxisomal biogenesis factor 3 (372 aa).

Over 1-15 the chain is Cytoplasmic; the sequence is MLRSMWNFLKRHKKK. The interval 1 to 45 is targeting to peroxisomes; sequence MLRSMWNFLKRHKKKCIFLGTVLGGVYILGKYGQKKLREIQEREA. Residues 16–36 form a helical membrane-spanning segment; the sequence is CIFLGTVLGGVYILGKYGQKK. Over 37-116 the chain is Peroxisomal; sequence LREIQEREAA…LKIISFTRSI (80 aa). Residues 117-140 traverse the membrane as a helical segment; sequence VAVYSTCMLVVLLRVQLNIIGGYI. An interaction with PEX19 region spans residues 120 to 136; that stretch reads YSTCMLVVLLRVQLNII. Topologically, residues 141-372 are cytoplasmic; the sequence is YLDNATVGKN…AFSTPQQLEK (232 aa).

The protein belongs to the peroxin-3 family. In terms of assembly, interacts with PEX19.

It is found in the peroxisome membrane. Functionally, involved in peroxisome biosynthesis and integrity. Assembles membrane vesicles before the matrix proteins are translocated. As a docking factor for PEX19, is necessary for the import of peroxisomal membrane proteins in the peroxisomes. In Rattus norvegicus (Rat), this protein is Peroxisomal biogenesis factor 3 (Pex3).